The following is a 198-amino-acid chain: Protein GrpE (198 aa).

Belongs to the GrpE family. As to quaternary structure, homodimer.

The protein resides in the cytoplasm. Its function is as follows. Participates actively in the response to hyperosmotic and heat shock by preventing the aggregation of stress-denatured proteins, in association with DnaK and GrpE. It is the nucleotide exchange factor for DnaK and may function as a thermosensor. Unfolded proteins bind initially to DnaJ; upon interaction with the DnaJ-bound protein, DnaK hydrolyzes its bound ATP, resulting in the formation of a stable complex. GrpE releases ADP from DnaK; ATP binding to DnaK triggers the release of the substrate protein, thus completing the reaction cycle. Several rounds of ATP-dependent interactions between DnaJ, DnaK and GrpE are required for fully efficient folding. The protein is Protein GrpE of Actinobacillus pleuropneumoniae serotype 3 (strain JL03).